The sequence spans 215 residues: N-(5'-phosphoribosyl)anthranilate isomerase (215 aa).

This sequence belongs to the TrpF family.

It carries out the reaction N-(5-phospho-beta-D-ribosyl)anthranilate = 1-(2-carboxyphenylamino)-1-deoxy-D-ribulose 5-phosphate. It participates in amino-acid biosynthesis; L-tryptophan biosynthesis; L-tryptophan from chorismate: step 3/5. This is N-(5'-phosphoribosyl)anthranilate isomerase from Sinorhizobium medicae (strain WSM419) (Ensifer medicae).